We begin with the raw amino-acid sequence, 62 residues long: uncharacterized protein (62 aa).

Transmembrane regions (helical) follow at residues 7-27 and 34-51; these read LLLL…VFIA and IIAS…GFTL.

It localises to the cell membrane. This is an uncharacterized protein from Bacillus subtilis (strain 168).